Reading from the N-terminus, the 283-residue chain is Bifunctional protein FolD (283 aa).

NADP(+) contacts are provided by residues 165 to 167 (GAS) and Ser-190.

It belongs to the tetrahydrofolate dehydrogenase/cyclohydrolase family. Homodimer.

It carries out the reaction (6R)-5,10-methylene-5,6,7,8-tetrahydrofolate + NADP(+) = (6R)-5,10-methenyltetrahydrofolate + NADPH. The enzyme catalyses (6R)-5,10-methenyltetrahydrofolate + H2O = (6R)-10-formyltetrahydrofolate + H(+). The protein operates within one-carbon metabolism; tetrahydrofolate interconversion. In terms of biological role, catalyzes the oxidation of 5,10-methylenetetrahydrofolate to 5,10-methenyltetrahydrofolate and then the hydrolysis of 5,10-methenyltetrahydrofolate to 10-formyltetrahydrofolate. The chain is Bifunctional protein FolD from Cupriavidus taiwanensis (strain DSM 17343 / BCRC 17206 / CCUG 44338 / CIP 107171 / LMG 19424 / R1) (Ralstonia taiwanensis (strain LMG 19424)).